We begin with the raw amino-acid sequence, 321 residues long: High osmolarity signaling protein SHO1A (321 aa).

The Cytoplasmic portion of the chain corresponds to 1–28; sequence MDYNNNRYGGGGGGSKFNLGHIVGDPFS. The chain crosses the membrane as a helical span at residues 29-49; that stretch reads LATIAIATAGWLIAFVSSIIA. The Extracellular portion of the chain corresponds to 50–58; sequence NIDQEYPNY. Residue asparagine 57 is glycosylated (N-linked (GlcNAc...) asparagine). A helical transmembrane segment spans residues 59 to 79; the sequence is SWWALAYMFFVILGVTFAVAA. Residue asparagine 80 is a topological domain, cytoplasmic. A helical transmembrane segment spans residues 81 to 101; sequence AVYTYHVAMVGFLAAGLVFTT. The Extracellular segment spans residues 102-116; it reads SSVNSLIYWSDKAKQ. The chain crosses the membrane as a helical span at residues 117-137; that stretch reads AAAAGFILLSMVSIVWIFYFG. At 138–321 the chain is on the cytoplasmic side; sequence SQPTASHRQT…IAPSNYLILL (184 aa). 2 disordered regions span residues 155–181 and 194–261; these read KDHAPSRASRHMTQSYRPETTHSAQHP and TSSP…QQPT. Polar residues-rich tracts occupy residues 165 to 181 and 225 to 237; these read HMTQSYRPETTHSAQHP and NFSNNQQPNPITS. Low complexity predominate over residues 238 to 249; it reads QNNPQNQHQQPQ. Residues 250–261 are compositionally biased toward polar residues; that stretch reads DLTSPSTTQQPT. One can recognise an SH3 domain in the interval 262 to 321; sequence EYPYRAKAIYSYEANPDDANEISFNKHEILEVSDVSGRWWQAKKENGETGIAPSNYLILL.

The protein belongs to the SHO1 family. Forms homooligomers.

It localises to the cell membrane. In terms of biological role, plasma membrane osmosensor that activates the high osmolarity glycerol (HOG) MAPK signaling pathway in response to high osmolarity. This chain is High osmolarity signaling protein SHO1A (SHO1A), found in Hortaea werneckii.